A 747-amino-acid polypeptide reads, in one-letter code: Myotubularin-related protein 12 (747 aa).

Residues 1–14 (MLGKGVVGGGGGTK) are compositionally biased toward gly residues. Residues 1-21 (MLGKGVVGGGGGTKGPKPSFV) form a disordered region. Residues 205–643 (FDTLKDWCWE…PEIKVWAQRY (439 aa)) form the Myotubularin phosphatase domain. Residues 449–558 (VPVFLLFLDC…KGQRKGMRFK (110 aa)) are interaction with MTM1. A phosphoserine mark is found at Ser-564, Ser-601, and Ser-716.

Belongs to the protein-tyrosine phosphatase family. Non-receptor class myotubularin subfamily. In terms of assembly, heterodimer with lipid phosphatase MTM1. Heterodimer with lipid phosphatase MTMR2.

It is found in the cytoplasm. The protein localises to the sarcoplasmic reticulum. It localises to the myofibril. Its subcellular location is the sarcomere. Its function is as follows. Acts as an adapter for the myotubularin-related phosphatases. Regulates phosphatase MTM1 protein stability and possibly its intracellular location. By stabilizing MTM1 protein levels, required for skeletal muscle maintenance but not for myogenesis. The protein is Myotubularin-related protein 12 (MTMR12) of Pongo abelii (Sumatran orangutan).